The following is a 428-amino-acid chain: Spermidine/putrescine import ATP-binding protein PotA (428 aa).

Positions 6-238 (IEFKNVSKTY…PINHFVADFI (233 aa)) constitute an ABC transporter domain. 40 to 47 (GASGSGKS) contributes to the ATP binding site.

The protein belongs to the ABC transporter superfamily. Spermidine/putrescine importer (TC 3.A.1.11.1) family. The complex is composed of two ATP-binding proteins (PotA), two transmembrane proteins (PotB and PotC) and a solute-binding protein (PotD).

The protein localises to the cell membrane. The catalysed reaction is ATP + H2O + polyamine-[polyamine-binding protein]Side 1 = ADP + phosphate + polyamineSide 2 + [polyamine-binding protein]Side 1.. In terms of biological role, part of the ABC transporter complex PotABCD involved in spermidine/putrescine import. Responsible for energy coupling to the transport system. In Lactococcus lactis subsp. lactis (strain IL1403) (Streptococcus lactis), this protein is Spermidine/putrescine import ATP-binding protein PotA.